The following is a 593-amino-acid chain: Kelch-like protein 2 (593 aa).

Positions 1–28 are disordered; it reads METPPLPPACTKQGHQKPLDSKDDNTEK. Positions 17–28 are enriched in basic and acidic residues; the sequence is KPLDSKDDNTEK. The BTB domain occupies 56–123; sequence CDVTIVAEDM…VYTAEIQVTE (68 aa). Kelch repeat units lie at residues 308–353, 354–400, 402–447, 449–496, 497–543, and 545–591; these read LMVV…YMAG, LVFA…VLNG, LYAV…VVGG, LYAV…VLNN, LLYA…AVNG, and LYVV…VIDK.

In terms of assembly, component of the BCR(KLHL2) E3 ubiquitin ligase complex, at least composed of CUL3 and KLHL2 and RBX1. Binds actin. Interacts with KLHL12. Interacts (via N-terminus) with FYN (via SH3 domain). As to expression, ubiquitous. Detected throughout the brain.

Its subcellular location is the cytoplasm. The protein localises to the cytoskeleton. It is found in the cell projection. It localises to the ruffle. The protein resides in the lamellipodium. Its subcellular location is the cytosol. It participates in protein modification; protein ubiquitination. Substrate-specific adapter of a BCR (BTB-CUL3-RBX1) E3 ubiquitin ligase complex that mediates the ubiquitination of target proteins, such as NPTXR, WNK1, WNK3 and WNK4, leading most often to their proteasomal degradation. The BCR(KLHL2) complex catalyzes ubiquitination and degradation of NPTXR. Responsible for degradative ubiquitination of the WNK kinases WNK1, WNK3 and WNK4. Plays a role in the reorganization of the actin cytoskeleton. Promotes growth of cell projections in oligodendrocyte precursors. The polypeptide is Kelch-like protein 2 (Homo sapiens (Human)).